Consider the following 811-residue polypeptide: Myb-like DNA-binding protein BAS1 (811 aa).

Residues 34–110 (HRKNGRNSWS…DVRKRWTGSL (77 aa)) enclose the Myb-like domain. 2 HTH myb-type domains span residues 111–165 (DPNL…GPGS) and 166–218 (KGRL…TMVV). 2 DNA-binding regions (H-T-H motif) span residues 138 to 161 (WLSISMDIPGRTEDQCAKRYIEVL) and 191 to 214 (WRKISSEMEFRPSLTCRNRWRKII). The segment covering 237-264 (DMTDGKLRQHPIADSDIRSDSTPNKEEQ) has biased composition (basic and acidic residues). Disordered stretches follow at residues 237–320 (DMTD…SAPP), 348–379 (SQMNKQSPGGISDSPQTSLPPAFNPASLDEHM), 535–713 (ATSH…LRDE), and 782–811 (LHNEAKKTSEHDMTSGGSTDNGSVLPLNPS). A compositionally biased stretch (low complexity) spans 265–275 (LQLSQQNNPSL). Residues 282 to 298 (NVKENESSKLPRLKDND) are compositionally biased toward basic and acidic residues. Polar residues-rich tracts occupy residues 348 to 366 (SQMNKQSPGGISDSPQTSL), 535 to 613 (ATSH…TSGS), and 653 to 664 (LNPSPNSVRSNG). Positions 782–794 (LHNEAKKTSEHDM) are enriched in basic and acidic residues.

Monomer.

Its subcellular location is the nucleus. Functionally, activates HIS4 transcription only in combination with PHO2/BAS2. BAS1 is also involved in the regulation of the purine biosynthesis pathway. This Saccharomyces cerevisiae (strain ATCC 204508 / S288c) (Baker's yeast) protein is Myb-like DNA-binding protein BAS1 (BAS1).